The following is a 293-amino-acid chain: Elongation factor Ts (293 aa).

The segment at 80-83 is involved in Mg(2+) ion dislocation from EF-Tu; it reads TDFV.

The protein belongs to the EF-Ts family.

The protein resides in the cytoplasm. In terms of biological role, associates with the EF-Tu.GDP complex and induces the exchange of GDP to GTP. It remains bound to the aminoacyl-tRNA.EF-Tu.GTP complex up to the GTP hydrolysis stage on the ribosome. The polypeptide is Elongation factor Ts (Staphylococcus aureus (strain Mu3 / ATCC 700698)).